We begin with the raw amino-acid sequence, 226 residues long: UPF0173 metal-dependent hydrolase TM_1162 (226 aa).

The protein belongs to the UPF0173 family.

This is UPF0173 metal-dependent hydrolase TM_1162 from Thermotoga maritima (strain ATCC 43589 / DSM 3109 / JCM 10099 / NBRC 100826 / MSB8).